Consider the following 568-residue polypeptide: Protein disconnected (568 aa).

Positions 16–77 are disordered; the sequence is GHGPHSHQHV…PRRWGSPPIN (62 aa). Basic residues predominate over residues 19 to 29; the sequence is PHSHQHVHSHL. The span at 30 to 45 shows a compositional bias: low complexity; that stretch reads PSHPQPNAASPASSPG. Residues 46-62 show a composition bias toward gly residues; the sequence is GSSGSGSGSAAGSGTGS. C2H2-type zinc fingers lie at residues 92–115 and 120–145; these read VQCS…SAVH and HKCT…ANPN. 4 disordered regions span residues 134-157, 220-364, 391-419, and 501-568; these read RRSR…RRKI, LLST…SDAF, SSAS…DSDS, and QQYN…PISV. Acidic residues predominate over residues 235–246; the sequence is NEQDADPEDDND. Polar residues predominate over residues 253–263; that stretch reads QANSSSPAASS. Low complexity predominate over residues 282-292; sequence SLSLASSSSIA. The segment covering 313 to 360 has biased composition (basic and acidic residues); sequence SEQDREQEQEQEQEREREAEKEQEQDVESDKEHEPEQEHELEREKRSP. Residues 391–402 are compositionally biased toward low complexity; it reads SSASSSSASASA. Residues 520–550 show a composition bias toward basic residues; it reads HLTLSHHHQEQHHHLGHHHMGHHHHHHHQHH. Residues 558–568 are compositionally biased toward polar residues; it reads SPAATNAPISV.

In terms of tissue distribution, expressed at low levels in the adult head and very low, but detectable, levels in the body.

It is found in the nucleus. Functionally, required for the establishment of stable connections between the larval optic nerves, the Bolwig's nerves, and their target cells in the brain during embryonic development. This is Protein disconnected (disco) from Drosophila melanogaster (Fruit fly).